Reading from the N-terminus, the 498-residue chain is Myocyte-specific enhancer factor 2D homolog (498 aa).

Positions 1–100 (MGRKKIQIQR…KGFNGCDSPE (100 aa)) are interaction with hdac9. In terms of domain architecture, MADS-box spans 3–57 (RKKIQIQRITDERNRQVTFTKRKFGLMKKAYELSVLCDCEIALIIFNHSNKLFQY). Residues 58-86 (ASTDMDKVLLKYTEYNEPHESRTNADIIE) constitute a DNA-binding region (mef2-type). Disordered stretches follow at residues 173 to 215 (LTDP…NSNG), 243 to 267 (LGKVIQAKSPPSPNQNSQLGANSRK), and 411 to 498 (SIKR…AWVT). Over residues 412 to 424 (IKREPASPNRERS) the composition is skewed to basic and acidic residues. Composition is skewed to polar residues over residues 425–434 (TGTPLSCFSH) and 447–457 (DSLSSNASSFE).

The protein belongs to the MEF2 family. As to quaternary structure, binds DNA as a multimer, probably as a dimer. Interacts with hdac9. As to expression, restricted to the somitic mesoderm of early embryos and to the body muscle (myotomes) of the tadpole. Expressed in all tissues examined in the adult.

Its subcellular location is the nucleus. Functionally, may regulate muscle-specific transcription in the embryo and may regulate transcription of a variety of cell types in the adult. It binds to the sequence 5'-CTA[TA]4TAR-3'. The polypeptide is Myocyte-specific enhancer factor 2D homolog (mef2d) (Xenopus laevis (African clawed frog)).